Consider the following 161-residue polypeptide: Nucleotide-binding protein BTH_I0730 (161 aa).

This sequence belongs to the YajQ family.

Its function is as follows. Nucleotide-binding protein. This Burkholderia thailandensis (strain ATCC 700388 / DSM 13276 / CCUG 48851 / CIP 106301 / E264) protein is Nucleotide-binding protein BTH_I0730.